A 243-amino-acid chain; its full sequence is Octanoyltransferase (243 aa).

Residues 49–227 (PLAPQAVWLL…SLSDRFGLVW (179 aa)) enclose the BPL/LPL catalytic domain. Residues 91–98 (RGGEVTHH), 158–160 (AIG), and 171–173 (GLA) contribute to the substrate site. Residue cysteine 189 is the Acyl-thioester intermediate of the active site.

The protein belongs to the LipB family.

The protein resides in the cytoplasm. The catalysed reaction is octanoyl-[ACP] + L-lysyl-[protein] = N(6)-octanoyl-L-lysyl-[protein] + holo-[ACP] + H(+). It participates in protein modification; protein lipoylation via endogenous pathway; protein N(6)-(lipoyl)lysine from octanoyl-[acyl-carrier-protein]: step 1/2. Its function is as follows. Catalyzes the transfer of endogenously produced octanoic acid from octanoyl-acyl-carrier-protein onto the lipoyl domains of lipoate-dependent enzymes. Lipoyl-ACP can also act as a substrate although octanoyl-ACP is likely to be the physiological substrate. This is Octanoyltransferase from Prochlorococcus marinus (strain MIT 9313).